Here is a 137-residue protein sequence, read N- to C-terminus: Transcription antitermination protein NusB (137 aa).

It belongs to the NusB family.

Functionally, involved in transcription antitermination. Required for transcription of ribosomal RNA (rRNA) genes. Binds specifically to the boxA antiterminator sequence of the ribosomal RNA (rrn) operons. This chain is Transcription antitermination protein NusB, found in Finegoldia magna (strain ATCC 29328 / DSM 20472 / WAL 2508) (Peptostreptococcus magnus).